A 487-amino-acid polypeptide reads, in one-letter code: Serine carboxypeptidase-like 37 (487 aa).

The signal sequence occupies residues 1–28; that stretch reads MVKQQDWSVTTCVLLFLFLASQIHCRSG. N-linked (GlcNAc...) asparagine glycosylation is present at asparagine 105. Disulfide bonds link cysteine 120/cysteine 368, cysteine 280/cysteine 291, and cysteine 315/cysteine 336. Serine 215 is a catalytic residue. N-linked (GlcNAc...) asparagine glycans are attached at residues asparagine 317, asparagine 357, and asparagine 375. Residue aspartate 407 is part of the active site. Asparagine 423 and asparagine 449 each carry an N-linked (GlcNAc...) asparagine glycan. Residue histidine 460 is part of the active site.

The protein belongs to the peptidase S10 family. Expressed in seedlings, roots, leaves, stems, flowers and siliques.

It localises to the secreted. Probable carboxypeptidase. In Arabidopsis thaliana (Mouse-ear cress), this protein is Serine carboxypeptidase-like 37 (SCPL37).